The sequence spans 209 residues: Dehydration-responsive element-binding protein 1F (209 aa).

Residues 14 to 26 (KKRAGRRVFKETR) carry the Nuclear localization signal motif. The segment at residues 29–86 (VYRGIRRRNGDKWVCEVREPTHQRRIWLGTYPTADMAARAHDVAVLALRGRSACLNFA) is a DNA-binding region (AP2/ERF). Residues 137 to 157 (FGSGSGSGSGSEERNSSSYGF) are disordered.

It belongs to the AP2/ERF transcription factor family. ERF subfamily.

It is found in the nucleus. Functionally, transcriptional activator that binds specifically to the DNA sequence 5'-[AG]CCGAC-3'. Binding to the C-repeat/DRE element mediates cold or dehydration-inducible transcription. CBF/DREB1 factors play a key role in freezing tolerance and cold acclimation. This is Dehydration-responsive element-binding protein 1F (DREB1F) from Arabidopsis thaliana (Mouse-ear cress).